A 119-amino-acid polypeptide reads, in one-letter code: Beta-2-microglobulin (119 aa).

The N-terminal stretch at 1–20 (MASSVVVALLVLLSLSGLEA) is a signal peptide. The Ig-like C1-type domain occupies 25-114 (PKIQVYSRHP…VTFSTPKTVK (90 aa)). Residues Cys45 and Cys100 are joined by a disulfide bond.

Belongs to the beta-2-microglobulin family. In terms of assembly, heterodimer of an alpha chain and a beta chain. Beta-2-microglobulin is the beta-chain of major histocompatibility complex class I molecules.

It is found in the secreted. Functionally, component of the class I major histocompatibility complex (MHC). Involved in the presentation of peptide antigens to the immune system. The protein is Beta-2-microglobulin (B2M) of Callithrix aurita (White-eared marmoset).